The sequence spans 175 residues: MYSALVRACAVIAFLILSPNCARALQDHAKDNGDIFIINYDSFDGDVDDISTTTSAPREADYVDFDEVNRNCNASFITSMTNVLQFNNTGDLPDDKDKVTSMCYFHCFFEKSGLMTDYKLNTDLVRKYVWPATGDSVEACEAEGKDETNACMRGYAIVKCVFTRALTDARNKPTV.

The N-terminal stretch at 1 to 24 is a signal peptide; sequence MYSALVRACAVIAFLILSPNCARA. 2 disulfide bridges follow: Cys-103–Cys-151 and Cys-140–Cys-160.

Present only in a small number of hairs scattered over the surface of the funiculus.

It is found in the secreted. This Drosophila melanogaster (Fruit fly) protein is General odorant-binding protein 84a (Obp84a).